We begin with the raw amino-acid sequence, 3498 residues long: Mediator of RNA polymerase II transcription subunit 12 (3498 aa).

6 disordered regions span residues 365–456 (IKQH…HTDI), 497–764 (GGVG…EPEK), 2209–2576 (AKKR…AYMK), 2589–2620 (ENNR…EAYA), 2637–2889 (LRKE…KEKQ), and 2917–3498 (NVAG…PNQY). The segment covering 368–394 (HEKRKAGSLKKSERRRRRGLSKNRPKK) has biased composition (basic residues). A compositionally biased stretch (basic and acidic residues) spans 404–416 (SLDHDKVQIKQEP). Composition is skewed to polar residues over residues 424–440 (GQQS…SHQY) and 512–536 (SNPT…SASP). Positions 539-570 (SVDKENECEKKEDESKTKEKNKDKEKDKEKEK) form a coiled coil. 2 stretches are compositionally biased toward basic and acidic residues: residues 540–578 (VDKE…HTND) and 593–614 (ANDK…TGKE). A compositionally biased stretch (low complexity) spans 621–630 (SKTAKTSTSA). Basic and acidic residues-rich tracts occupy residues 691-719 (EVDK…KKAD), 738-764 (ESEK…EPEK), and 2209-2285 (AKKR…KRAS). A required for nuclear localization region spans residues 2142–3498 (QTTRLDKVAK…YPNQQPPNQY (1357 aa)). A coiled-coil region spans residues 2203 to 2290 (VIDEEEAKKR…EKRASDAAAA (88 aa)). Low complexity-rich tracts occupy residues 2342-2360 (RADT…APIA) and 2409-2431 (LADA…SSMP). The stretch at 2395–2420 (RNLLNRKKEEKRNSLADASAAAAAAN) forms a coiled coil. A compositionally biased stretch (polar residues) spans 2444-2456 (QSAGATQQLQGMQ). Positions 2459-2479 (QMGGSMSGMNQNMGGMNQSMS) are enriched in low complexity. Over residues 2514–2530 (NRSSGPVSSETRQQIME) the composition is skewed to polar residues. Basic and acidic residues-rich tracts occupy residues 2547 to 2576 (QKQR…AYMK), 2589 to 2616 (ENNR…RAAE), and 2637 to 2724 (LRKE…EQQR). Over residues 2725–2770 (RSQQNPYMNQQGQYSQQPPPSYQQSSYPNNYQPGQQGNQPPNYQQP) the composition is skewed to low complexity. Polar residues predominate over residues 2771 to 2783 (SHQSMQQGHQAGY). Positions 2784 to 2810 (QQTSNQMQMNMQQQQNRQQGGPQQSFS) are enriched in low complexity. Polar residues-rich tracts occupy residues 2816-2827 (NQPSQPGYSGYN), 2842-2852 (RNPFGNQQDMQ), 2868-2881 (HAQQ…QLSL), and 2926-2956 (GQQQ…SSNP). Low complexity predominate over residues 2957–2993 (QGGMQSYQQQQPVLGQPGPIQTGQSTQQQIPAQSQQQ). The span at 2994–3009 (YNSGRPQMHTTPTKND) shows a compositional bias: polar residues. The segment covering 3039 to 3100 (GQNVPGGYQQ…NVSQSQSAAQ (62 aa)) has biased composition (low complexity). Residues 3103-3127 (RPSQDSAYQQSGYNQTGNQSYQRPD) show a composition bias toward polar residues. Composition is skewed to low complexity over residues 3128 to 3184 (QQQQ…SAQY) and 3192 to 3223 (QGYD…QTQQ). Polar residues predominate over residues 3231–3253 (SGYTANSGGSSNILNQSMEESGL). Low complexity predominate over residues 3254–3311 (NQGFSGASSNASSQQGGSSQMQQSGYGMPGNQMQMQQNQKQQVQRGMPTGMGQTNMGQ). Residues 3312–3321 (SGMGQSGMGQ) show a composition bias toward gly residues. Composition is skewed to low complexity over residues 3336 to 3356 (QGQQ…NQRG) and 3370 to 3408 (QQQH…QGQQ). Polar residues predominate over residues 3414-3425 (PSQQQSGAAYSN). The span at 3426–3436 (QMQFQGVRQGQ) shows a compositional bias: low complexity. Positions 3437–3446 (QGMGGMGGSG) are enriched in gly residues. The span at 3447–3498 (QQQPQTQPHGSNQYYQQQQDQRMQQQPQQPGQQQQHGYGMGQYPNQQPPNQY) shows a compositional bias: low complexity.

It belongs to the Mediator complex subunit 12 family. As to quaternary structure, component of the Mediator complex. As to expression, ubiquitously expressed.

It localises to the nucleus. Component of the Mediator complex, a coactivator involved in regulated gene transcription of nearly all RNA polymerase II-dependent genes. Mediator functions as a bridge to convey information from gene-specific regulatory proteins to the basal RNA polymerase II transcription machinery. Mediator is recruited to promoters by direct interactions with regulatory proteins and serves as a scaffold for the assembly of a functional preinitiation complex with RNA polymerase II and the general transcription factors. Functions downstream of let-60 during vulval induction. Required for asymmetric division of T-cells and for hypodermal development. The protein is Mediator of RNA polymerase II transcription subunit 12 (dpy-22) of Caenorhabditis elegans.